A 619-amino-acid polypeptide reads, in one-letter code: Cationic amino acid transporter 3 (619 aa).

At M1 to D36 the chain is on the cytoplasmic side. A helical transmembrane segment spans residues L37 to V57. Residues A58–K61 are Extracellular-facing. A helical transmembrane segment spans residues A62–L82. Residues C83–E107 are Cytoplasmic-facing. A helical membrane pass occupies residues L108 to V128. At A129–E162 the chain is on the extracellular side. Residues Y163–A183 traverse the membrane as a helical segment. Over S184–K191 the chain is Cytoplasmic. A helical transmembrane segment spans residues V192–G212. At D213 to D233 the chain is on the extracellular side. The N-linked (GlcNAc...) asparagine glycan is linked to N232. A helical transmembrane segment spans residues T234–L254. At R255–P285 the chain is on the cytoplasmic side. Residues M286–L306 form a helical membrane-spanning segment. Residues T307 to Y335 are Extracellular-facing. Residues V336–M356 form a helical membrane-spanning segment. Residues P357–T382 are Cytoplasmic-facing. The helical transmembrane segment at P383 to L403 threads the bilayer. Residues T404–L406 are Extracellular-facing. Residues V407–I427 traverse the membrane as a helical segment. The Cytoplasmic portion of the chain corresponds to L428–Q475. The chain crosses the membrane as a helical span at residues I476–A496. The Extracellular segment spans residues Q497–D506. The chain crosses the membrane as a helical span at residues L507–I527. Residues W528–K540 are Cytoplasmic-facing. A helical transmembrane segment spans residues V541–Q561. Residues M562 to R569 are Extracellular-facing. A helical transmembrane segment spans residues F570 to L590. At E591–V619 the chain is on the cytoplasmic side. Residue T606 is modified to Phosphothreonine. Phosphoserine is present on S618.

The protein belongs to the amino acid-polyamine-organocation (APC) superfamily. Cationic amino acid transporter (CAT) (TC 2.A.3.3) family. Post-translationally, N-glycosylated. In terms of tissue distribution, highly expressed in thymus, uterus and testis. Detected at lower levels in brain, mammary gland, prostate, salivary gland and fetal spleen. In brain, highest expression in thalamus, hippocampus and amygdala.

It is found in the cell membrane. It catalyses the reaction L-arginine(in) = L-arginine(out). The catalysed reaction is L-lysine(in) = L-lysine(out). The enzyme catalyses L-ornithine(in) = L-ornithine(out). Functionally, uniporter that mediates the uptake of cationic L-amino acids such as L-arginine, L-lysine and L-ornithine. The transport is sodium ions- and pH-independent, moderately trans-stimulated and is mediated by passive diffusion. In Homo sapiens (Human), this protein is Cationic amino acid transporter 3.